The chain runs to 149 residues: Large ribosomal subunit protein bL9 (149 aa).

This sequence belongs to the bacterial ribosomal protein bL9 family.

Its function is as follows. Binds to the 23S rRNA. The sequence is that of Large ribosomal subunit protein bL9 from Amoebophilus asiaticus (strain 5a2).